The primary structure comprises 898 residues: Putative aconitate hydratase, cytoplasmic (898 aa).

Substrate contacts are provided by residues Gln-90 and 209-211 (DSH). Residues Cys-441, Cys-507, and Cys-510 each contribute to the [4Fe-4S] cluster site. Substrate-binding positions include Arg-540, Arg-545, Arg-703, and 784–785 (SR).

Belongs to the aconitase/IPM isomerase family. It depends on [4Fe-4S] cluster as a cofactor.

It is found in the cytoplasm. It catalyses the reaction citrate = D-threo-isocitrate. Its pathway is carbohydrate metabolism; glyoxylate and dicarboxylate metabolism. Catalyzes the isomerization of citrate to isocitrate via cis-aconitate. This Oryza sativa subsp. japonica (Rice) protein is Putative aconitate hydratase, cytoplasmic.